A 348-amino-acid polypeptide reads, in one-letter code: Selenide, water dikinase (348 aa).

Cys-17 is a catalytic residue. Residues Lys-20 and 48 to 50 each bind ATP; that span reads TSD. Asp-51 is a binding site for Mg(2+). ATP is bound by residues Asp-68, Asp-91, and 139–141; that span reads GHT. Residue Asp-91 coordinates Mg(2+). Asp-227 provides a ligand contact to Mg(2+).

This sequence belongs to the selenophosphate synthase 1 family. Class I subfamily. Homodimer. The cofactor is Mg(2+).

It catalyses the reaction hydrogenselenide + ATP + H2O = selenophosphate + AMP + phosphate + 2 H(+). In terms of biological role, synthesizes selenophosphate from selenide and ATP. This is Selenide, water dikinase from Dechloromonas aromatica (strain RCB).